A 381-amino-acid polypeptide reads, in one-letter code: Opsin-1 (381 aa).

Residues Met1–Trp53 are Extracellular-facing. A glycan (N-linked (GlcNAc...) asparagine) is linked at Asn24. The chain crosses the membrane as a helical span at residues His54–Ile78. Residues Phe79 to Asn90 lie on the Cytoplasmic side of the membrane. The chain crosses the membrane as a helical span at residues Leu91 to Cys115. Topologically, residues Tyr116–Tyr130 are extracellular. Residues Cys127 and Cys204 are joined by a disulfide bond. A helical membrane pass occupies residues Ala131–Leu150. Topologically, residues Asp151–Thr169 are cytoplasmic. The helical transmembrane segment at Ala170 to Asn193 threads the bilayer. Topologically, residues Arg194–Ser217 are extracellular. Asn200 is a glycosylation site (N-linked (GlcNAc...) asparagine). The chain crosses the membrane as a helical span at residues Tyr218–Val245. Residues Ser246–Lys280 lie on the Cytoplasmic side of the membrane. The chain crosses the membrane as a helical span at residues Val281–Ile304. Residues Phe305 to Ser311 are Extracellular-facing. The helical transmembrane segment at Pro312 to Ser336 threads the bilayer. Lys323 carries the post-translational modification N6-(retinylidene)lysine. Topologically, residues His337 to Ala381 are cytoplasmic. The span at Ala354 to Val370 shows a compositional bias: polar residues. A disordered region spans residues Ala354 to Ala381. A compositionally biased stretch (basic and acidic residues) spans Ser371–Ala381.

This sequence belongs to the G-protein coupled receptor 1 family. Opsin subfamily. In terms of processing, phosphorylated on some or all of the serine and threonine residues present in the C-terminal region.

The protein resides in the cell projection. Its subcellular location is the rhabdomere membrane. Its function is as follows. Visual pigments are the light-absorbing molecules that mediate vision. They consist of an apoprotein, opsin, covalently linked to cis-retinal. In Schistocerca gregaria (Desert locust), this protein is Opsin-1 (Lo1).